We begin with the raw amino-acid sequence, 276 residues long: Shikimate dehydrogenase (NADP(+)) (276 aa).

Shikimate contacts are provided by residues 15 to 17 (SKS) and T62. Residue K66 is the Proton acceptor of the active site. Residue E78 coordinates NADP(+). 2 residues coordinate shikimate: N87 and D103. Residues 127-131 (GAGGV), 150-155 (NRTHIK), and M214 each bind NADP(+). A shikimate-binding site is contributed by Y216. Residue G239 participates in NADP(+) binding.

The protein belongs to the shikimate dehydrogenase family. Homodimer.

The catalysed reaction is shikimate + NADP(+) = 3-dehydroshikimate + NADPH + H(+). It participates in metabolic intermediate biosynthesis; chorismate biosynthesis; chorismate from D-erythrose 4-phosphate and phosphoenolpyruvate: step 4/7. Involved in the biosynthesis of the chorismate, which leads to the biosynthesis of aromatic amino acids. Catalyzes the reversible NADPH linked reduction of 3-dehydroshikimate (DHSA) to yield shikimate (SA). The sequence is that of Shikimate dehydrogenase (NADP(+)) from Haemophilus ducreyi (strain 35000HP / ATCC 700724).